We begin with the raw amino-acid sequence, 261 residues long: MTHQTHAYHMVDPSPWPLTGALSALLMTSGLTMWFHYHSVTLLLLGLTTNILTMFQWWRDVVREGTFQGHHTPVVQESLRYGMILFITSEVLFFTGFFWAFYHSSLAPTPELGSYWPPVGVYPLNPLEVPLLNTSVLLASGVTITWAHHSLMEGNRKNMLQALLITILLGVYFTLLQMFEYYEASFTISDGIYGSTFFVTTGFHGLHVIIGSTFLLTCFIRQLKFHFTSNHHFGFEAAAWYWHFVDVVWLFLYLSIYWWGS.

Residues 1–15 (MTHQTHAYHMVDPSP) lie on the Mitochondrial matrix side of the membrane. Residues 16 to 34 (WPLTGALSALLMTSGLTMW) traverse the membrane as a helical segment. Residues 35–40 (FHYHSV) are Mitochondrial intermembrane-facing. A helical membrane pass occupies residues 41 to 66 (TLLLLGLTTNILTMFQWWRDVVREGT). Residues 67–72 (FQGHHT) lie on the Mitochondrial matrix side of the membrane. Residues 73-105 (PVVQESLRYGMILFITSEVLFFTGFFWAFYHSS) form a helical membrane-spanning segment. Residues 106–128 (LAPTPELGSYWPPVGVYPLNPLE) lie on the Mitochondrial intermembrane side of the membrane. A helical membrane pass occupies residues 129–152 (VPLLNTSVLLASGVTITWAHHSLM). At 153-155 (EGN) the chain is on the mitochondrial matrix side. A helical transmembrane segment spans residues 156 to 183 (RKNMLQALLITILLGVYFTLLQMFEYYE). Over 184–190 (ASFTISD) the chain is Mitochondrial intermembrane. The helical transmembrane segment at 191–223 (GIYGSTFFVTTGFHGLHVIIGSTFLLTCFIRQL) threads the bilayer. Topologically, residues 224-232 (KFHFTSNHH) are mitochondrial matrix. A helical membrane pass occupies residues 233–256 (FGFEAAAWYWHFVDVVWLFLYLSI). The Mitochondrial intermembrane segment spans residues 257–261 (YWWGS).

The protein belongs to the cytochrome c oxidase subunit 3 family. As to quaternary structure, component of the cytochrome c oxidase (complex IV, CIV), a multisubunit enzyme composed of 14 subunits. The complex is composed of a catalytic core of 3 subunits MT-CO1, MT-CO2 and MT-CO3, encoded in the mitochondrial DNA, and 11 supernumerary subunits COX4I, COX5A, COX5B, COX6A, COX6B, COX6C, COX7A, COX7B, COX7C, COX8 and NDUFA4, which are encoded in the nuclear genome. The complex exists as a monomer or a dimer and forms supercomplexes (SCs) in the inner mitochondrial membrane with NADH-ubiquinone oxidoreductase (complex I, CI) and ubiquinol-cytochrome c oxidoreductase (cytochrome b-c1 complex, complex III, CIII), resulting in different assemblies (supercomplex SCI(1)III(2)IV(1) and megacomplex MCI(2)III(2)IV(2)).

The protein localises to the mitochondrion inner membrane. The catalysed reaction is 4 Fe(II)-[cytochrome c] + O2 + 8 H(+)(in) = 4 Fe(III)-[cytochrome c] + 2 H2O + 4 H(+)(out). In terms of biological role, component of the cytochrome c oxidase, the last enzyme in the mitochondrial electron transport chain which drives oxidative phosphorylation. The respiratory chain contains 3 multisubunit complexes succinate dehydrogenase (complex II, CII), ubiquinol-cytochrome c oxidoreductase (cytochrome b-c1 complex, complex III, CIII) and cytochrome c oxidase (complex IV, CIV), that cooperate to transfer electrons derived from NADH and succinate to molecular oxygen, creating an electrochemical gradient over the inner membrane that drives transmembrane transport and the ATP synthase. Cytochrome c oxidase is the component of the respiratory chain that catalyzes the reduction of oxygen to water. Electrons originating from reduced cytochrome c in the intermembrane space (IMS) are transferred via the dinuclear copper A center (CU(A)) of subunit 2 and heme A of subunit 1 to the active site in subunit 1, a binuclear center (BNC) formed by heme A3 and copper B (CU(B)). The BNC reduces molecular oxygen to 2 water molecules using 4 electrons from cytochrome c in the IMS and 4 protons from the mitochondrial matrix. In Loxodonta africana (African elephant), this protein is Cytochrome c oxidase subunit 3 (MT-CO3).